A 176-amino-acid chain; its full sequence is ATP-dependent protease subunit HslV (176 aa).

Residue Thr4 is part of the active site. The Na(+) site is built by Gly158, Cys161, and Thr164.

The protein belongs to the peptidase T1B family. HslV subfamily. As to quaternary structure, a double ring-shaped homohexamer of HslV is capped on each side by a ring-shaped HslU homohexamer. The assembly of the HslU/HslV complex is dependent on binding of ATP.

Its subcellular location is the cytoplasm. The enzyme catalyses ATP-dependent cleavage of peptide bonds with broad specificity.. Its activity is regulated as follows. Allosterically activated by HslU binding. Its function is as follows. Protease subunit of a proteasome-like degradation complex believed to be a general protein degrading machinery. This Rhizobium meliloti (strain 1021) (Ensifer meliloti) protein is ATP-dependent protease subunit HslV.